The primary structure comprises 243 residues: Adenosylcobinamide-GDP ribazoletransferase (243 aa).

5 helical membrane-spanning segments follow: residues leucine 31–alanine 51, leucine 57–leucine 77, isoleucine 109–isoleucine 129, methionine 135–threonine 155, and leucine 188–tryptophan 208.

It belongs to the CobS family. It depends on Mg(2+) as a cofactor.

The protein localises to the cell inner membrane. The catalysed reaction is alpha-ribazole + adenosylcob(III)inamide-GDP = adenosylcob(III)alamin + GMP + H(+). It catalyses the reaction alpha-ribazole 5'-phosphate + adenosylcob(III)inamide-GDP = adenosylcob(III)alamin 5'-phosphate + GMP + H(+). It functions in the pathway cofactor biosynthesis; adenosylcobalamin biosynthesis; adenosylcobalamin from cob(II)yrinate a,c-diamide: step 7/7. Joins adenosylcobinamide-GDP and alpha-ribazole to generate adenosylcobalamin (Ado-cobalamin). Also synthesizes adenosylcobalamin 5'-phosphate from adenosylcobinamide-GDP and alpha-ribazole 5'-phosphate. This Pseudomonas fluorescens (strain Pf0-1) protein is Adenosylcobinamide-GDP ribazoletransferase.